Reading from the N-terminus, the 67-residue chain is Large ribosomal subunit protein uL29 (67 aa).

This sequence belongs to the universal ribosomal protein uL29 family.

This chain is Large ribosomal subunit protein uL29, found in Ruminiclostridium cellulolyticum (strain ATCC 35319 / DSM 5812 / JCM 6584 / H10) (Clostridium cellulolyticum).